Here is a 359-residue protein sequence, read N- to C-terminus: MATSSQLLPNGNLSRNGKTKTEDGEEVEAVVGARAAGADAGVALTGRLTGHPSTSGTFMKLKTYLLALRPWSLSASLVPTLLGSALAYRSQWAEEFSLATFFLTAFTVVTVHCAGNVVNTYFDFIKGIDKQKADDRTLVDHILTKDEVVSLGAILYMAGCGGFVLLAVLSPAKMEHLALIYFGGLSSSFLYTGGIGFKYIALGDLVILILFGPISVLFAFMSQTGHLDWTTMGYAIPLALNTEAILHSNNTRDADNDRRAGIVTLAILIGRTASHVLYAMLLFAPYSLFFIFGLKYSLWFLLPLVTLPQAFQIEKRFRNEQTMHLVPRQTAKLNFFFGILYVVACCCAHQLPTFGLRRN.

The span at Met-1–Asn-16 shows a compositional bias: polar residues. The interval Met-1–Asp-23 is disordered. The next 8 membrane-spanning stretches (helical) occupy residues Ala-67–Arg-89, Leu-98–Val-118, Val-148–Val-168, Leu-177–Phe-197, Ile-200–Phe-220, Ile-262–Ala-284, Phe-289–Phe-311, and Phe-335–Gly-355.

This sequence belongs to the UbiA prenyltransferase family.

The protein localises to the mitochondrion membrane. The protein operates within quinol/quinone metabolism; menaquinone biosynthesis. Prenyltransferase that mediates the formation of menaquinone-4 (MK-4), a vitamin K2 isoform, thereby acting as a mitochondrial electron carrier. Mediates the conversion of phylloquinone (PK) into MK-4, probably by cleaving the side chain of phylloquinone (PK) to release 2-methyl-1,4-naphthoquinone (menadione; K3) and then prenylating it with geranylgeranyl pyrophosphate (GGPP) to form MK-4. MK-4 acts as a membrane electron carrier downstream of a electron transport chain complex, improving mitochondrial oxygen consumption. The protein is UbiA prenyltransferase domain-containing protein 1 homolog (heix) of Drosophila melanogaster (Fruit fly).